A 401-amino-acid chain; its full sequence is Sodium/glutamate symporter (401 aa).

Topologically, residues 1–6 (MFHLDT) are periplasmic. The chain crosses the membrane as a helical span at residues 7-24 (LATLVAATLTLLLGRKLV). At 25-32 (HSVSFLKK) the chain is on the cytoplasmic side. The chain crosses the membrane as a helical span at residues 33–52 (YTIPEPVAGGLLVALALLVL). Over 53-69 (KKSMGWEVNFDMSLRDP) the chain is Periplasmic. The helical transmembrane segment at 70-87 (LMLAFFATIGLNANIASL) threads the bilayer. Residues 88–93 (RAGGRV) lie on the Cytoplasmic side of the membrane. Residues 94 to 116 (VGIFLIVVVGLLVMQNAIGIGMA) form a helical membrane-spanning segment. Over 117-156 (SLLGLDPLMGLLAGSITLSGGHGTGAAWSKLFIERYGFTN) the chain is Periplasmic. Residues 157-179 (ATEVAMACATFGLVLGGLIGGPV) traverse the membrane as a helical segment. Residues 180–212 (ARYLVKHSTTPNGIPDDQEVPTAFEKPDVGRMI) are Cytoplasmic-facing. The helical transmembrane segment at 213–235 (TSLVLIETIALIAICLTVGKIVA) threads the bilayer. Residues 236-244 (QLLAGTAFE) lie on the Periplasmic side of the membrane. Residues 245–267 (LPTFVCVLFVGVILSNGLSIMGF) traverse the membrane as a helical segment. At 268–276 (YRVFERAVS) the chain is on the cytoplasmic side. A helical transmembrane segment spans residues 277 to 292 (VLGNVSLSLFLAMALM). At 293-301 (GLKLWELAS) the chain is on the periplasmic side. A helical transmembrane segment spans residues 302–324 (LALPMLAILVVQTIFMALYAIFV). Over 325 to 367 (TWRMMGKNYDAAVLAAGHCGFGLGATPTAIANMQAITERFGPS) the chain is Cytoplasmic. Residues 368 to 390 (HMAFLVVPMVGAFFIDIVNALVI) form a helical membrane-spanning segment. The Periplasmic segment spans residues 391–401 (KLYLMLPIFAG).

The protein belongs to the glutamate:Na(+) symporter (ESS) (TC 2.A.27) family.

The protein localises to the cell inner membrane. Inhibited by the uncoupler carbonylcyanide m-chlorophenylhydrazone (CCCP) and the ionophore monensin. Catalyzes the sodium-dependent, binding-protein-independent transport of glutamate. The polypeptide is Sodium/glutamate symporter (Escherichia coli (strain K12)).